We begin with the raw amino-acid sequence, 1136 residues long: Tyrosine-protein kinase receptor Tie-1 (1136 aa).

The first 23 residues, 1–23 (MVWLEPPLLLPIFFLASHVGAAV), serve as a signal peptide directing secretion. At 24-757 (DLTLLADLRL…IHAAEEGLDQ (734 aa)) the chain is on the extracellular side. Residues 43–106 (CVSGEAGAGR…PSDLVGVFSC (64 aa)) form the Ig-like C2-type 1 domain. Residues asparagine 84 and asparagine 159 are each glycosylated (N-linked (GlcNAc...) asparagine). EGF-like domains are found at residues 212-254 (GCEA…TRCE), 256-301 (ACRE…SQCQ), and 303-343 (ACAP…MHCE). Intrachain disulfides connect cysteine 226-cysteine 235, cysteine 229-cysteine 242, and cysteine 244-cysteine 253. 3 cysteine pairs are disulfide-bonded: cysteine 317/cysteine 325, cysteine 319/cysteine 331, and cysteine 333/cysteine 342. Positions 370 to 424 (CAAAGNPFPVRGSMELRKPDGTVLLSTKAIVEPDRTTAEFEVPRLALGDSGLWEC) constitute an Ig-like C2-type 2 domain. Fibronectin type-III domains lie at 444–543 (PPVP…CPEP), 546–640 (KPWL…LPPS), and 644–737 (APRH…TLGN). N-linked (GlcNAc...) asparagine glycans are attached at residues asparagine 501, asparagine 594, and asparagine 707. Residues 758-782 (QLVLAVVGSVSATCLTILAALLTLA) traverse the membrane as a helical segment. Residues 783-1136 (CIRKSCLHRR…AGIDATAEEA (354 aa)) are Cytoplasmic-facing. Positions 837-1116 (ITFEDLIGEG…RMLEARKAYV (280 aa)) constitute a Protein kinase domain. ATP-binding positions include 843–851 (IGEGNFGQV) and lysine 868. Residue aspartate 977 is the Proton acceptor of the active site. Tyrosine 1005 carries the phosphotyrosine; by autocatalysis modification.

The protein belongs to the protein kinase superfamily. Tyr protein kinase family. Tie subfamily. Heterodimer with TEK/TIE2. Interacts with SVEP1 (via C-terminus). Post-translationally, phosphorylated on tyrosine residues in response to ANGPT1, most likely by TEK/TIE2. As to expression, specifically expressed in developing vascular endothelial cells.

The protein localises to the cell membrane. It carries out the reaction L-tyrosyl-[protein] + ATP = O-phospho-L-tyrosyl-[protein] + ADP + H(+). In terms of biological role, transmembrane tyrosine-protein kinase that may modulate TEK/TIE2 activity and contribute to the regulation of angiogenesis. In Bos taurus (Bovine), this protein is Tyrosine-protein kinase receptor Tie-1 (TIE1).